The sequence spans 494 residues: 3-octaprenyl-4-hydroxybenzoate carboxy-lyase (494 aa).

N172 is a Mn(2+) binding site. Prenylated FMN is bound by residues 175-177, 189-191, and 194-195; these read IYR, RWL, and RG. Residue E238 participates in Mn(2+) binding. The Proton donor role is filled by D294.

Belongs to the UbiD family. As to quaternary structure, homohexamer. Prenylated FMN serves as cofactor. It depends on Mn(2+) as a cofactor.

The protein resides in the cell membrane. The catalysed reaction is a 4-hydroxy-3-(all-trans-polyprenyl)benzoate + H(+) = a 2-(all-trans-polyprenyl)phenol + CO2. Its pathway is cofactor biosynthesis; ubiquinone biosynthesis. In terms of biological role, catalyzes the decarboxylation of 3-octaprenyl-4-hydroxy benzoate to 2-octaprenylphenol, an intermediate step in ubiquinone biosynthesis. This is 3-octaprenyl-4-hydroxybenzoate carboxy-lyase from Janthinobacterium sp. (strain Marseille) (Minibacterium massiliensis).